Here is a 207-residue protein sequence, read N- to C-terminus: Small ribosomal subunit protein uS4 (207 aa).

Positions 98-164 (RRLDNVVYRM…AKFKNLVEVN (67 aa)) constitute an S4 RNA-binding domain.

It belongs to the universal ribosomal protein uS4 family. In terms of assembly, part of the 30S ribosomal subunit. Contacts protein S5. The interaction surface between S4 and S5 is involved in control of translational fidelity.

One of the primary rRNA binding proteins, it binds directly to 16S rRNA where it nucleates assembly of the body of the 30S subunit. Its function is as follows. With S5 and S12 plays an important role in translational accuracy. The chain is Small ribosomal subunit protein uS4 from Clostridioides difficile (strain 630) (Peptoclostridium difficile).